Reading from the N-terminus, the 328-residue chain is MSQLDLLNIVHRPRRLRRTAALRNLVQENTLTVNDLVFPLFVMPGTNAVEEVPSMPGSFRFTIDRAVEECKELYDLGIQAIDLFGIPEKKTEDGSEAYNDNGILQQAIRAIKKAVPELCIMTDVALDPFTPFGHDGLVRDGIILNDETVEVLQKMAVSHAEAGADFVSPSDMMDGRIGAIREALDESDHSDVGILSYAAKYASSFYGPFRDALHSAPQFGDKSTYQMNPANTDEAMKEVELDIIEGADIVMVKPGLAYLDIVWRTKERFDVPVAIYHVSGEYAMVKAAAANGWIDEERVMMESLLCMKRAGADIIFTYYAKEAAKKLR.

The Schiff-base intermediate with substrate role is filled by K200. Positions 210 and 222 each coordinate 5-aminolevulinate. E238 contacts Mg(2+). K253 (schiff-base intermediate with substrate) is an active-site residue. 5-aminolevulinate contacts are provided by S279 and Y318.

This sequence belongs to the ALAD family. In terms of assembly, homooctamer.

It carries out the reaction 2 5-aminolevulinate = porphobilinogen + 2 H2O + H(+). It functions in the pathway porphyrin-containing compound metabolism; protoporphyrin-IX biosynthesis; coproporphyrinogen-III from 5-aminolevulinate: step 1/4. With respect to regulation, stimulated by magnesium, inhibited by zinc. Catalyzes an early step in the biosynthesis of tetrapyrroles. Binds two molecules of 5-aminolevulinate per subunit, each at a distinct site, and catalyzes their condensation to form porphobilinogen. The chain is Delta-aminolevulinic acid dehydratase (hemB) from Chlorobaculum tepidum (strain ATCC 49652 / DSM 12025 / NBRC 103806 / TLS) (Chlorobium tepidum).